The sequence spans 295 residues: UDP-N-acetylenolpyruvoylglucosamine reductase (295 aa).

The region spanning 23-188 (KVGGPADFLA…ISAKFALKPG (166 aa)) is the FAD-binding PCMH-type domain. Residue R167 is part of the active site. S217 acts as the Proton donor in catalysis. Residue E287 is part of the active site.

Belongs to the MurB family. It depends on FAD as a cofactor.

The protein localises to the cytoplasm. The catalysed reaction is UDP-N-acetyl-alpha-D-muramate + NADP(+) = UDP-N-acetyl-3-O-(1-carboxyvinyl)-alpha-D-glucosamine + NADPH + H(+). The protein operates within cell wall biogenesis; peptidoglycan biosynthesis. Functionally, cell wall formation. The sequence is that of UDP-N-acetylenolpyruvoylglucosamine reductase from Streptococcus pyogenes serotype M18 (strain MGAS8232).